Consider the following 179-residue polypeptide: Tetratricopeptide repeat protein 36 (179 aa).

3 TPR repeats span residues 43–76 (SLQL…CPKN), 78–110 (SAYN…AGPK), and 115–148 (CQAY…GSSF).

Belongs to the TTC36 family.

This Caenorhabditis elegans protein is Tetratricopeptide repeat protein 36.